The primary structure comprises 293 residues: MMRISLFLLTNLAVMVVFGIVLSLTGIQSSSAAGLMIMAGLFGFGGAFVSLLMSKSMALRSVGGEVIEQPRNETERWLLNTVRQQAQQANITMPQVALYHAPDINAFATGARRDASLVAVSTGLLQNMNRDEAEAVIAHEISHIANGDMVTMTLIQGVVNTFVIFISRILAQLAAGFMSSGRDEGESGNGNPLVYFAVSMVLELVFGVLASIITLWFSRHREFHADAGSARLVGREKMIAALQRLKTSYEPQEASSMMAFCINGRNKTFSELFMSHPPLDKRIEALRSGAYLQ.

2 helical membrane-spanning segments follow: residues 4-24 (ISLF…VLSL) and 33-53 (AGLM…SLLM). Residue His-139 coordinates Zn(2+). Glu-140 is an active-site residue. His-143 serves as a coordination point for Zn(2+). A run of 2 helical transmembrane segments spans residues 158–178 (VVNT…AGFM) and 193–213 (LVYF…ASII). Residue Glu-222 participates in Zn(2+) binding.

It belongs to the peptidase M48B family. The cofactor is Zn(2+).

It is found in the cell inner membrane. The protein is Protease HtpX of Sodalis glossinidius (strain morsitans).